A 140-amino-acid polypeptide reads, in one-letter code: L-fucose mutarotase (140 aa).

The Proton donor role is filled by histidine 22. Substrate is bound by residues aspartate 30, arginine 107, and 129–131 (YGN).

The protein belongs to the RbsD / FucU family. FucU mutarotase subfamily. Homodecamer.

The protein resides in the cytoplasm. The enzyme catalyses alpha-L-fucose = beta-L-fucose. Its pathway is carbohydrate metabolism; L-fucose metabolism. Involved in the anomeric conversion of L-fucose. This chain is L-fucose mutarotase, found in Salmonella typhimurium (strain LT2 / SGSC1412 / ATCC 700720).